The primary structure comprises 257 residues: Lysine-rich coiled-coil protein 1 (257 aa).

The interval 145–257 (NTSAHQASYK…MLWDQSILGF (113 aa)) is disordered. Over residues 152–162 (SYKHIHQKRKR) the composition is skewed to basic residues. Composition is skewed to basic and acidic residues over residues 163 to 176 (HTEE…EERP), 183 to 193 (ACEEIDLDKYK), 200 to 212 (TEAE…TEKL), and 219 to 228 (RSRDVASKKE). Positions 210–248 (EKLKNRKEKRSRDVASKKEERKRRKEKKEQGQERTEEEM) form a coiled coil.

This is Lysine-rich coiled-coil protein 1 (KRCC1) from Bos taurus (Bovine).